The chain runs to 573 residues: Diflavin flavoprotein A 1 (573 aa).

The segment at 43 to 236 (QNGTTYNSYL…GTISTVANGH (194 aa)) is zinc metallo-hydrolase. Residues H92, E94, D96, H159, D178, and H236 each contribute to the Fe cation site. In terms of domain architecture, Flavodoxin-like spans 265-401 (VVVFYVADYG…LCDESGTDLG (137 aa)). Residues 424-573 (IGRISGGLYI…VHHRKVGNYY (150 aa)) are flavodoxin-reductase-like.

In the N-terminal section; belongs to the zinc metallo-hydrolase group 3 family. The protein in the C-terminal section; belongs to the flavodoxin reductase family. In terms of assembly, homodimer. The cofactor is Fe cation. It depends on FAD as a cofactor. FMN is required as a cofactor.

Mediates electron transfer from NADH to oxygen, reducing it to water. This modular protein has 3 redox cofactors, in other organisms the same activity requires 2 or 3 proteins. In Synechocystis sp. (strain ATCC 27184 / PCC 6803 / Kazusa), this protein is Diflavin flavoprotein A 1 (dfa1).